An 831-amino-acid chain; its full sequence is V-type proton ATPase 116 kDa subunit a1 (831 aa).

At 1-388 (MGELFRSEEM…DAYGIGSYRE (388 aa)) the chain is on the cytoplasmic side. The chain crosses the membrane as a helical span at residues 389 to 407 (INPAPYTIITFPFLFAVMF). Residues 408-409 (GD) lie on the Vacuolar side of the membrane. Residues 410–426 (FGHGILMTLFAVWMVVR) traverse the membrane as a helical segment. Residues 427–441 (ESRILSQKIDNELFS) are Cytoplasmic-facing. The chain crosses the membrane as a helical span at residues 442 to 471 (MMFSGRYIILLMGLFSTYTGLIYNDCFSKA). Residues 472-534 (LNLFGSSWSV…ATNKLTFLNS (63 aa)) lie on the Vacuolar side of the membrane. The helical transmembrane segment at 535 to 554 (FKMKMSVILGIIHMIFGVAL) threads the bilayer. The Cytoplasmic segment spans residues 555-572 (SVLNHIYFKKPLNIYLSF). Residues 573–593 (IPEMIFMTTLFGYLVILIIYK) traverse the membrane as a helical segment. Residues 594-638 (WCAYDVSTSMVAPSLLIHFINMFLFSYQDTSLPMLYKGQMGLQCF) are Vacuolar-facing. Residues 639-658 (LVVCAIICVPWMLVLKPLIL) form a helical membrane-spanning segment. Over 659-718 (RRQYLRRKHLGTHNFGGIRVGNGPTEEDAEIIQHDQLSMHSDEEEEFDFGDTVVHQAIHT) the chain is Cytoplasmic. Residues 719–743 (IEYCLGCISNTASYLRLWALSLAHA) traverse the membrane as a helical segment. Residues 744–764 (QLSEVLWTMVMHIGLNIRSLG) are Vacuolar-facing. The chain crosses the membrane as a helical span at residues 765–803 (GGIALVFIFSAFATLTIAILLIMEGLSAFLHALRLHWVE). Over 804–831 (FRNKFYMGTGFKFLPFSFETIWEGKFDD) the chain is Cytoplasmic.

The protein belongs to the V-ATPase 116 kDa subunit family. In terms of assembly, V-ATPase is a heteromultimeric enzyme made up of two complexes: the ATP-hydrolytic V1 complex and the proton translocation V0 complex. The V1 complex consists of three catalytic AB heterodimers that form a heterohexamer, three peripheral stalks each consisting of EG heterodimers, one central rotor including subunits D and F, and the regulatory subunits C and H. The proton translocation complex V0 consists of the proton transport subunit a, a ring of proteolipid subunits c9c'', rotary subunit d, subunits e and f, and two accessory subunits.

Its subcellular location is the cytoplasmic vesicle. It is found in the clathrin-coated vesicle membrane. It localises to the secretory vesicle. The protein localises to the synaptic vesicle membrane. The protein resides in the melanosome. In terms of biological role, subunit of the V0 complex of vacuolar(H+)-ATPase (V-ATPase), a multisubunit enzyme composed of a peripheral complex (V1) that hydrolyzes ATP and a membrane integral complex (V0) that translocates protons. V-ATPase is responsible for acidifying and maintaining the pH of intracellular compartments and in some cell types, is targeted to the plasma membrane, where it is responsible for acidifying the extracellular environment. Required for assembly and activity of the vacuolar ATPase. The protein is V-type proton ATPase 116 kDa subunit a1 (atp6v0a1) of Xenopus laevis (African clawed frog).